The primary structure comprises 487 residues: Zinc finger and BTB domain-containing protein 32 (487 aa).

Positions 29-87 constitute a BTB domain; the sequence is CDTLITVGGQEFPAHSLVLAGVSQQLGRRGQWALGEGISPSTFAQLLNFVYGESVELQP. A compositionally biased stretch (basic and acidic residues) spans 113-166; sequence RGDRAKKPDPGLKKHQEEPEKPSRNAERELGDPGEKQKPEQVSRTGGREQEMLH. Disordered regions lie at residues 113–208 and 308–371; these read RGDR…ADGK and QNQL…ARSR. Residues 308–320 are compositionally biased toward polar residues; it reads QNQLASSSPTPGS. The segment covering 357-369 has biased composition (pro residues); sequence PPRPHPPPAPPAR. C2H2-type zinc fingers lie at residues 373–395, 401–423, and 428–450; these read YACSVCGKRFSLKHQMETHYRVH, FSCSLCPQRSRDFSAMTKHLRTH, and YRXXLCGAGCPSLASMQAHMRGH. The tract at residues 468–487 is disordered; the sequence is SSSRPSRPSTSPCCPSSSTT.

It belongs to the krueppel C2H2-type zinc-finger protein family. As to quaternary structure, homodimer (via PTB domain). Interacts with the N-terminal of FANCC. Interacts with ZBTB16. Interacts with GATA3.

The protein resides in the nucleus. Its function is as follows. DNA-binding protein that binds to the to a 5'-TGTACAGTGT-3' core sequence. May function as a transcriptional transactivator and transcriptional repressor. Probably exerts its repressor effect by preventing GATA3 from binding to DNA. May play a role in regulating the differentiation and activation of helper T-cells. The protein is Zinc finger and BTB domain-containing protein 32 (ZBTB32) of Pan troglodytes (Chimpanzee).